The chain runs to 164 residues: Large ribosomal subunit protein bL9 (164 aa).

The protein belongs to the bacterial ribosomal protein bL9 family.

Functionally, binds to the 23S rRNA. This Psychrobacter sp. (strain PRwf-1) protein is Large ribosomal subunit protein bL9.